The chain runs to 200 residues: Probable molybdenum cofactor guanylyltransferase (200 aa).

GTP contacts are provided by residues 9-11 (LAG), lysine 21, aspartate 69, and aspartate 100. Aspartate 100 serves as a coordination point for Mg(2+).

Belongs to the MobA family. Requires Mg(2+) as cofactor.

Its subcellular location is the cytoplasm. It catalyses the reaction Mo-molybdopterin + GTP + H(+) = Mo-molybdopterin guanine dinucleotide + diphosphate. Functionally, transfers a GMP moiety from GTP to Mo-molybdopterin (Mo-MPT) cofactor (Moco or molybdenum cofactor) to form Mo-molybdopterin guanine dinucleotide (Mo-MGD) cofactor. The polypeptide is Probable molybdenum cofactor guanylyltransferase (Bacillus thuringiensis (strain Al Hakam)).